The chain runs to 38 residues: Cytochrome b6-f complex subunit 5 (38 aa).

The helical transmembrane segment at 5–25 threads the bilayer; sequence LLSGIVLGSIPITLAGSFVTA.

The protein belongs to the PetG family. In terms of assembly, the 4 large subunits of the cytochrome b6-f complex are cytochrome b6, subunit IV (17 kDa polypeptide, PetD), cytochrome f and the Rieske protein, while the 4 small subunits are PetG, PetL, PetM and PetN. The complex functions as a dimer.

The protein localises to the plastid. It localises to the chloroplast thylakoid membrane. In terms of biological role, component of the cytochrome b6-f complex, which mediates electron transfer between photosystem II (PSII) and photosystem I (PSI), cyclic electron flow around PSI, and state transitions. PetG is required for either the stability or assembly of the cytochrome b6-f complex. The sequence is that of Cytochrome b6-f complex subunit 5 from Huperzia lucidula (Shining clubmoss).